The following is a 146-amino-acid chain: Large ribosomal subunit protein uL15 (146 aa).

Residues 1–13 show a composition bias toward basic and acidic residues; it reads MKLHELKAAEGSR. The tract at residues 1–51 is disordered; sequence MKLHELKAAEGSRKVRNRVGRGTSSGNGKTSGRGQKGQKARSGGGVRLGFE. 2 stretches are compositionally biased toward gly residues: residues 23–35 and 42–51; these read TSSG…GRGQ and SGGGVRLGFE.

Belongs to the universal ribosomal protein uL15 family. Part of the 50S ribosomal subunit.

Functionally, binds to the 23S rRNA. The polypeptide is Large ribosomal subunit protein uL15 (Streptococcus pyogenes serotype M1).